A 384-amino-acid polypeptide reads, in one-letter code: Carbamoyl phosphate synthase small chain (384 aa).

The interval 1 to 192 is CPSase; the sequence is MIKKIPAILV…LADRNREKIY (192 aa). Residues S51, G244, and G246 each contribute to the L-glutamine site. The 187-residue stretch at 196-382 folds into the Glutamine amidotransferase type-1 domain; that stretch reads KVIVIDFGVK…IEIMKQFRKE (187 aa). C272 functions as the Nucleophile in the catalytic mechanism. Residues M273, Q276, N312, G314, and F315 each contribute to the L-glutamine site. Residues H355 and E357 contribute to the active site.

The protein belongs to the CarA family. Composed of two chains; the small (or glutamine) chain promotes the hydrolysis of glutamine to ammonia, which is used by the large (or ammonia) chain to synthesize carbamoyl phosphate. Tetramer of heterodimers (alpha,beta)4.

The protein localises to the plastid. Its subcellular location is the chloroplast. It carries out the reaction hydrogencarbonate + L-glutamine + 2 ATP + H2O = carbamoyl phosphate + L-glutamate + 2 ADP + phosphate + 2 H(+). The catalysed reaction is L-glutamine + H2O = L-glutamate + NH4(+). The protein operates within amino-acid biosynthesis; L-arginine biosynthesis; carbamoyl phosphate from bicarbonate: step 1/1. Its pathway is pyrimidine metabolism; UMP biosynthesis via de novo pathway; (S)-dihydroorotate from bicarbonate: step 1/3. Functionally, small subunit of the glutamine-dependent carbamoyl phosphate synthetase (CPSase). CPSase catalyzes the formation of carbamoyl phosphate from the ammonia moiety of glutamine, carbonate, and phosphate donated by ATP, constituting the first step of 2 biosynthetic pathways, one leading to arginine and/or urea and the other to pyrimidine nucleotides. The small subunit (glutamine amidotransferase) binds and cleaves glutamine to supply the large subunit with the substrate ammonia. The protein is Carbamoyl phosphate synthase small chain of Porphyra purpurea (Red seaweed).